The sequence spans 134 residues: Profilin-2 (134 aa).

Cysteines 13 and 118 form a disulfide. Positions 84–100 (AVIRGKKGSGGITIKKT) match the Involved in PIP2 interaction motif. Thr114 is subject to Phosphothreonine.

Belongs to the profilin family. In terms of assembly, occurs in many kinds of cells as a complex with monomeric actin in a 1:1 ratio. Post-translationally, phosphorylated by MAP kinases.

It localises to the cytoplasm. Its subcellular location is the cytoskeleton. Binds to actin and affects the structure of the cytoskeleton. At high concentrations, profilin prevents the polymerization of actin, whereas it enhances it at low concentrations. This Olea europaea (Common olive) protein is Profilin-2.